Consider the following 295-residue polypeptide: MEYIKTATEVYILKIIGGPASQLLASRTARALGTEPVLCEFNRFPDGELYLRIAEEIENEKVTLIQSTPTDSDFVALLQLIDACEGAAEINVVIPYMGYARQDKKFKSGEPVSARAIARCINADRVFTINIHEKSVLEHFPCPAENLDAAALIGSYVAGFGLERPMLVAPDEGARGLVKNVASGHGFDHDHLQKTRLSGDTVVIKTKNLDVTGRHVVLVDDMIATGGTMAESIRMLKSQGAIDVHLACVHPVLTRNAALRLFHAGVKDIIGTDTLEKAESKLSVAPLIAEALSGY.

ATP contacts are provided by residues 46-48 (DGE) and 101-102 (RQ). Positions 132 and 171 each coordinate Mg(2+). Residue K194 is part of the active site. D-ribose 5-phosphate is bound by residues R196 and D220.

The protein belongs to the ribose-phosphate pyrophosphokinase family. Class III (archaeal) subfamily. The cofactor is Mg(2+).

It localises to the cytoplasm. It catalyses the reaction D-ribose 5-phosphate + ATP = 5-phospho-alpha-D-ribose 1-diphosphate + AMP + H(+). It participates in metabolic intermediate biosynthesis; 5-phospho-alpha-D-ribose 1-diphosphate biosynthesis; 5-phospho-alpha-D-ribose 1-diphosphate from D-ribose 5-phosphate (route I): step 1/1. Its function is as follows. Involved in the biosynthesis of the central metabolite phospho-alpha-D-ribosyl-1-pyrophosphate (PRPP) via the transfer of pyrophosphoryl group from ATP to 1-hydroxyl of ribose-5-phosphate (Rib-5-P). The chain is Ribose-phosphate pyrophosphokinase from Methanosarcina mazei (strain ATCC BAA-159 / DSM 3647 / Goe1 / Go1 / JCM 11833 / OCM 88) (Methanosarcina frisia).